The primary structure comprises 218 residues: Ribonuclease T (218 aa).

The region spanning 20–194 is the Exonuclease domain; it reads VVIDVETAGF…YDAERTAELF (175 aa). Residues D23, E25, H181, and D186 each contribute to the Mg(2+) site. The Proton donor/acceptor role is filled by H181.

This sequence belongs to the RNase T family. As to quaternary structure, homodimer. Requires Mg(2+) as cofactor.

Functionally, trims short 3' overhangs of a variety of RNA species, leaving a one or two nucleotide 3' overhang. Responsible for the end-turnover of tRNA: specifically removes the terminal AMP residue from uncharged tRNA (tRNA-C-C-A). Also appears to be involved in tRNA biosynthesis. The polypeptide is Ribonuclease T (Baumannia cicadellinicola subsp. Homalodisca coagulata).